Here is a 158-residue protein sequence, read N- to C-terminus: Transcription elongation factor GreA (158 aa).

Residues 53–73 (EQQSFIEGRIQEIEGKLSNAQ) are a coiled coil.

This sequence belongs to the GreA/GreB family.

Functionally, necessary for efficient RNA polymerase transcription elongation past template-encoded arresting sites. The arresting sites in DNA have the property of trapping a certain fraction of elongating RNA polymerases that pass through, resulting in locked ternary complexes. Cleavage of the nascent transcript by cleavage factors such as GreA or GreB allows the resumption of elongation from the new 3'terminus. GreA releases sequences of 2 to 3 nucleotides. The protein is Transcription elongation factor GreA of Halorhodospira halophila (strain DSM 244 / SL1) (Ectothiorhodospira halophila (strain DSM 244 / SL1)).